The following is a 198-amino-acid chain: MKLYSLSVLYKGENKVHLLKSAYDVSSFSFFQRSSVQEFMTFTSQLIVERSDKGSRSSVKEQEYLCHVYVRNDSLAGVVIADNEYPPRVCFTLLEKVLEEFSTQVDRIDWPSGSPATIQYNALDSYLSKYQNPRDADPMSKVQAELDETKIVLHNTMESLLQRGEKLDDLVSKSEVLGTQSKAFYKTARKQNSCCDIM.

The region spanning 8-127 is the Longin domain; sequence VLYKGENKVH…IQYNALDSYL (120 aa). One can recognise a v-SNARE coiled-coil homology domain in the interval 138–198; it reads PMSKVQAELD…RKQNSCCDIM (61 aa). The S-palmitoyl cysteine moiety is linked to residue Cys194. Cys195 bears the Cysteine methyl ester mark. A lipid anchor (S-farnesyl cysteine) is attached at Cys195. The propeptide at 196–198 is removed in mature form; that stretch reads DIM.

Belongs to the synaptobrevin family. In terms of processing, palmitoylated; catalyzes its own palmitoylation. Palmitoylation is required for Golgi targeting. Post-translationally, farnesylation is required for Golgi targeting.

It localises to the cytoplasm. It is found in the cytosol. Its subcellular location is the cytoplasmic vesicle membrane. The protein resides in the golgi apparatus membrane. Its function is as follows. Vesicular soluble NSF attachment protein receptor (v-SNARE) mediating vesicle docking and fusion to a specific acceptor cellular compartment. Functions in endoplasmic reticulum to Golgi transport; as part of a SNARE complex composed of GOSR1, GOSR2 and STX5. Functions in early/recycling endosome to TGN transport; as part of a SNARE complex composed of BET1L, GOSR1 and STX5. Has a S-palmitoyl transferase activity. This Xenopus laevis (African clawed frog) protein is Synaptobrevin homolog YKT6-B (ykt6-b).